We begin with the raw amino-acid sequence, 189 residues long: HGPRTase-like protein (189 aa).

It belongs to the purine/pyrimidine phosphoribosyltransferase family. Archaeal HPRT subfamily.

In terms of biological role, may catalyze a purine salvage reaction, the substrate is unknown. The sequence is that of HGPRTase-like protein from Natronomonas pharaonis (strain ATCC 35678 / DSM 2160 / CIP 103997 / JCM 8858 / NBRC 14720 / NCIMB 2260 / Gabara) (Halobacterium pharaonis).